A 126-amino-acid chain; its full sequence is Putative esterase ComA2 (126 aa).

The protein belongs to the thioesterase PaaI family.

Functionally, is not required for competence. This Bacillus subtilis (strain 168) protein is Putative esterase ComA2 (yuxO).